Consider the following 806-residue polypeptide: Centrosomal protein of 85 kDa-like (806 aa).

Disordered regions lie at residues M1–D27, N51–K89, and H101–D146. S15 carries the phosphoserine modification. The span at T60–D74 shows a compositional bias: polar residues. Residues D135–D146 show a composition bias toward basic and acidic residues. Residue S207 is modified to Phosphoserine. The tract at residues P308–P353 is disordered. Positions P322–S351 are enriched in polar residues. A coiled-coil region spans residues Q442–K644.

This sequence belongs to the CEP85 family.

The protein localises to the cytoplasm. It is found in the cytoskeleton. The protein resides in the microtubule organizing center. It localises to the centrosome. Functionally, plays an essential role in neuronal cell migration. In Mus musculus (Mouse), this protein is Centrosomal protein of 85 kDa-like.